The sequence spans 474 residues: Glycogen synthase (474 aa).

Lys-15 contributes to the ADP-alpha-D-glucose binding site.

The protein belongs to the glycosyltransferase 1 family. Bacterial/plant glycogen synthase subfamily.

The catalysed reaction is [(1-&gt;4)-alpha-D-glucosyl](n) + ADP-alpha-D-glucose = [(1-&gt;4)-alpha-D-glucosyl](n+1) + ADP + H(+). The protein operates within glycan biosynthesis; glycogen biosynthesis. Its function is as follows. Synthesizes alpha-1,4-glucan chains using ADP-glucose. This is Glycogen synthase from Chlamydia trachomatis serovar D (strain ATCC VR-885 / DSM 19411 / UW-3/Cx).